The chain runs to 55 residues: Preprotein translocase subunit SecG (55 aa).

Residues 1-31 (MPKNNTNENFQSGAGLIRYFNEEEIKGPALD) lie on the Cytoplasmic side of the membrane. Residues 32–51 (PKLIIYIGIAMAVIVELAKI) traverse the membrane as a helical segment. The Extracellular portion of the chain corresponds to 52 to 55 (FWPV).

Belongs to the SEC61-beta family. In terms of assembly, component of the protein translocase complex. Heterotrimer consisting of alpha (SecY), beta (SecG) and gamma (SecE) subunits. Can form oligomers of the heterotrimer.

Its subcellular location is the cell membrane. Involved in protein export. The function of the beta subunit is unknown, but it may be involved in stabilization of the trimeric complex. The sequence is that of Preprotein translocase subunit SecG from Picrophilus torridus (strain ATCC 700027 / DSM 9790 / JCM 10055 / NBRC 100828 / KAW 2/3).